A 633-amino-acid chain; its full sequence is Phosphomethylpyrimidine synthase (633 aa).

Substrate is bound by residues Asn245, Met274, Tyr303, His339, 359–361 (SRG), 400–403 (DGLR), and Glu439. His443 provides a ligand contact to Zn(2+). Tyr466 is a binding site for substrate. Position 507 (His507) interacts with Zn(2+). Positions 587, 590, and 595 each coordinate [4Fe-4S] cluster.

This sequence belongs to the ThiC family. Homodimer. [4Fe-4S] cluster serves as cofactor.

It carries out the reaction 5-amino-1-(5-phospho-beta-D-ribosyl)imidazole + S-adenosyl-L-methionine = 4-amino-2-methyl-5-(phosphooxymethyl)pyrimidine + CO + 5'-deoxyadenosine + formate + L-methionine + 3 H(+). It functions in the pathway cofactor biosynthesis; thiamine diphosphate biosynthesis. Functionally, catalyzes the synthesis of the hydroxymethylpyrimidine phosphate (HMP-P) moiety of thiamine from aminoimidazole ribotide (AIR) in a radical S-adenosyl-L-methionine (SAM)-dependent reaction. This chain is Phosphomethylpyrimidine synthase, found in Neisseria gonorrhoeae (strain ATCC 700825 / FA 1090).